A 381-amino-acid polypeptide reads, in one-letter code: Adenylate cyclase (381 aa).

Positions 1–30 are disordered; sequence MTVDDTGSGADGDGRVDPEPAPDSADPGED. The 110-residue stretch at 191 to 300 folds into the Guanylate cyclase domain; the sequence is AVGFADLVGF…TTVNLASRLT (110 aa). Mg(2+) contacts are provided by Asp196 and Asp240.

It belongs to the adenylyl cyclase class-3 family. Requires Mg(2+) as cofactor.

The catalysed reaction is ATP = 3',5'-cyclic AMP + diphosphate. In Streptomyces coelicolor (strain ATCC BAA-471 / A3(2) / M145), this protein is Adenylate cyclase (cya).